A 347-amino-acid polypeptide reads, in one-letter code: Cyclic AMP-dependent transcription factor ATF-4 (347 aa).

The interval 202–296 is disordered; the sequence is TPQCVKEEDT…AATRYRQKKR (95 aa). The residue at position 211 (Thr211) is a Phosphothreonine. Phosphoserine occurs at positions 213, 217, 222, 229, and 233. The BetaTrCP degron motif signature appears at 213 to 222; the sequence is SDSDSGICMS. A compositionally biased stretch (polar residues) spans 228-238; sequence GSPQHSPSTSR. Pro234 bears the 4-hydroxyproline mark. 2 positions are modified to phosphoserine: Ser243 and Ser246. Residues Lys256 and Lys268 each participate in a glycyl lysine isopeptide (Lys-Gly) (interchain with G-Cter in SUMO2) cross-link. A compositionally biased stretch (basic and acidic residues) spans 269-283; that stretch reads VKTEKLDKKLKKMEQ. Positions 274–337 constitute a bZIP domain; it reads LDKKLKKMEQ…QYLKDLIEEV (64 aa). Residues 276 to 296 are basic motif; it reads KKLKKMEQNKTAATRYRQKKR. An interaction with GABBR1 region spans residues 301-337; it reads ALTGECKELEKKNEALKEKADSLAKEIQYLKDLIEEV. Residues 302–330 are leucine-zipper; the sequence is LTGECKELEKKNEALKEKADSLAKEIQYL. N6-acetyllysine is present on Lys307.

It belongs to the bZIP family. As to quaternary structure, binds DNA as a homodimer and as a heterodimer. Heterodimer; heterodimerizes with CEBPB. Heterodimer; heterodimerizes with DDIT3/CHOP. Interacts with CEP290 (via an N-terminal region). Interacts with NEK6, DAPK2 (isoform 2) and ZIPK/DAPK3. Interacts (via its leucine zipper domain) with GABBR1 and GABBR2 (via their C-termini). Forms a heterodimer with TXLNG in osteoblasts. Interacts (via its DNA binding domain) with FOXO1 (C-terminal half); the interaction occurs in osteoblasts and regulates glucose homeostasis through suppression of beta-cell proliferation and a decrease in insulin production. Interacts with SATB2; the interaction results in enhanced DNA binding and transactivation by these transcription factors. Interacts with ABRAXAS2. Interacts with TRIB3, inhibiting the transactivation activity of ATF4. Interacts with DISC1; which inhibits ATF4 transcription factor activity by disrupting ATF4 dimerization and DNA-binding. Interacts with EP300/p300; EP300/p300 stabilizes ATF4 and increases its transcriptional activity independently of its catalytic activity by preventing its ubiquitination. Ubiquitinated by SCF(BTRC) in response to mTORC1 signal, followed by proteasomal degradation and leading to down-regulate expression of SIRT4. Interaction with EP300/p300 inhibits ubiquitination by SCF(BTRC). Post-translationally, phosphorylation at Ser-243 by RPS6KA3/RSK2 in osteoblasts enhances transactivation activity and promotes osteoblast differentiation. Phosphorylated on the betaTrCP degron motif at Ser-217, followed by phosphorylation at Thr-211, Ser-222, Ser-229, Ser-233 and Ser-246, promoting interaction with BTRC and ubiquitination. Phosphorylation is promoted by mTORC1. Phosphorylation at Ser-213 by CK2 decreases its stability. Phosphorylated by NEK6. In terms of processing, hydroxylated by PHD3, leading to decreased protein stability. Expressed in brain, heart, liver, spleen, lung and muscle, but not testis.

It localises to the nucleus. The protein localises to the nucleus speckle. It is found in the cytoplasm. The protein resides in the cell membrane. Its subcellular location is the cytoskeleton. It localises to the microtubule organizing center. The protein localises to the centrosome. Its function is as follows. Transcription factor that binds the cAMP response element (CRE) (consensus: 5'-GTGACGT[AC][AG]-3') and displays two biological functions, as regulator of metabolic and redox processes under normal cellular conditions, and as master transcription factor during integrated stress response (ISR). Binds to asymmetric CRE's as a heterodimer and to palindromic CRE's as a homodimer. Core effector of the ISR, which is required for adaptation to various stress such as endoplasmic reticulum (ER) stress, amino acid starvation, mitochondrial stress or oxidative stress. During ISR, ATF4 translation is induced via an alternative ribosome translation re-initiation mechanism in response to EIF2S1/eIF-2-alpha phosphorylation, and stress-induced ATF4 acts as a master transcription factor of stress-responsive genes in order to promote cell recovery. Promotes the transcription of genes linked to amino acid sufficiency and resistance to oxidative stress to protect cells against metabolic consequences of ER oxidation. Activates the transcription of NLRP1, possibly in concert with other factors in response to ER stress. Activates the transcription of asparagine synthetase (ASNS) in response to amino acid deprivation or ER stress. However, when associated with DDIT3/CHOP, the transcriptional activation of the ASNS gene is inhibited in response to amino acid deprivation. Together with DDIT3/CHOP, mediates programmed cell death by promoting the expression of genes involved in cellular amino acid metabolic processes, mRNA translation and the terminal unfolded protein response (terminal UPR), a cellular response that elicits programmed cell death when ER stress is prolonged and unresolved. Activates the expression of COX7A2L/SCAF1 downstream of the EIF2AK3/PERK-mediated unfolded protein response, thereby promoting formation of respiratory chain supercomplexes and increasing mitochondrial oxidative phosphorylation. Together with DDIT3/CHOP, activates the transcription of the IRS-regulator TRIB3 and promotes ER stress-induced neuronal cell death by regulating the expression of BBC3/PUMA in response to ER stress. May cooperate with the UPR transcriptional regulator QRICH1 to regulate ER protein homeostasis which is critical for cell viability in response to ER stress. In the absence of stress, ATF4 translation is at low levels and it is required for normal metabolic processes such as embryonic lens formation, fetal liver hematopoiesis, bone development and synaptic plasticity. Acts as a regulator of osteoblast differentiation in response to phosphorylation by RPS6KA3/RSK2: phosphorylation in osteoblasts enhances transactivation activity and promotes expression of osteoblast-specific genes and post-transcriptionally regulates the synthesis of Type I collagen, the main constituent of the bone matrix. Cooperates with FOXO1 in osteoblasts to regulate glucose homeostasis through suppression of beta-cell production and decrease in insulin production. Activates transcription of SIRT4. Regulates the circadian expression of the core clock component PER2 and the serotonin transporter SLC6A4. Binds in a circadian time-dependent manner to the cAMP response elements (CRE) in the SLC6A4 and PER2 promoters and periodically activates the transcription of these genes. Mainly acts as a transcriptional activator in cellular stress adaptation, but it can also act as a transcriptional repressor: acts as a regulator of synaptic plasticity by repressing transcription, thereby inhibiting induction and maintenance of long-term memory. Regulates synaptic functions via interaction with DISC1 in neurons, which inhibits ATF4 transcription factor activity by disrupting ATF4 dimerization and DNA-binding. In Rattus norvegicus (Rat), this protein is Cyclic AMP-dependent transcription factor ATF-4.